The chain runs to 711 residues: Polyribonucleotide nucleotidyltransferase (711 aa).

Positions 486 and 492 each coordinate Mg(2+). Residues 553–612 (PRIHTIKISTDKIKDVIGKGGSVIRALTEETGTTIEIEDDGTVKIAATDGEKAKYAIRRI) enclose the KH domain. Residues 622-690 (GRIYNSKVTR…RQGRVRLSIK (69 aa)) form the S1 motif domain. Positions 689 to 711 (IKEATEQSQPAAAPEAPASEQAE) are disordered. Residues 694–711 (EQSQPAAAPEAPASEQAE) show a composition bias toward low complexity.

The protein belongs to the polyribonucleotide nucleotidyltransferase family. In terms of assembly, component of the RNA degradosome, which is a multiprotein complex involved in RNA processing and mRNA degradation. The cofactor is Mg(2+).

The protein resides in the cytoplasm. The catalysed reaction is RNA(n+1) + phosphate = RNA(n) + a ribonucleoside 5'-diphosphate. Involved in mRNA degradation. Catalyzes the phosphorolysis of single-stranded polyribonucleotides processively in the 3'- to 5'-direction. This Salmonella typhi protein is Polyribonucleotide nucleotidyltransferase.